Consider the following 262-residue polypeptide: Acyl-[acyl-carrier-protein]--UDP-N-acetylglucosamine O-acyltransferase (262 aa).

This sequence belongs to the transferase hexapeptide repeat family. LpxA subfamily. In terms of assembly, homotrimer.

The protein resides in the cytoplasm. The enzyme catalyses a (3R)-hydroxyacyl-[ACP] + UDP-N-acetyl-alpha-D-glucosamine = a UDP-3-O-[(3R)-3-hydroxyacyl]-N-acetyl-alpha-D-glucosamine + holo-[ACP]. It participates in glycolipid biosynthesis; lipid IV(A) biosynthesis; lipid IV(A) from (3R)-3-hydroxytetradecanoyl-[acyl-carrier-protein] and UDP-N-acetyl-alpha-D-glucosamine: step 1/6. Functionally, involved in the biosynthesis of lipid A, a phosphorylated glycolipid that anchors the lipopolysaccharide to the outer membrane of the cell. In Enterobacter sp. (strain 638), this protein is Acyl-[acyl-carrier-protein]--UDP-N-acetylglucosamine O-acyltransferase.